The following is a 409-amino-acid chain: tRNA(Met) cytidine acetate ligase (409 aa).

Residues 7 to 20 (VVEYNPMHNGHLYH), Gly102, Asn169, and Arg194 each bind ATP.

This sequence belongs to the TmcAL family.

Its subcellular location is the cytoplasm. It carries out the reaction cytidine(34) in elongator tRNA(Met) + acetate + ATP = N(4)-acetylcytidine(34) in elongator tRNA(Met) + AMP + diphosphate. In terms of biological role, catalyzes the formation of N(4)-acetylcytidine (ac(4)C) at the wobble position of elongator tRNA(Met), using acetate and ATP as substrates. First activates an acetate ion to form acetyladenylate (Ac-AMP) and then transfers the acetyl group to tRNA to form ac(4)C34. The protein is tRNA(Met) cytidine acetate ligase of Clostridium botulinum (strain ATCC 19397 / Type A).